Here is a 173-residue protein sequence, read N- to C-terminus: Bifunctional protein PyrR (173 aa).

Positions 93 to 105 (IILIDDVLYTGRT) match the PRPP-binding motif.

Belongs to the purine/pyrimidine phosphoribosyltransferase family. PyrR subfamily. As to quaternary structure, homodimer and homohexamer; in equilibrium.

The enzyme catalyses UMP + diphosphate = 5-phospho-alpha-D-ribose 1-diphosphate + uracil. In terms of biological role, regulates transcriptional attenuation of the pyrimidine nucleotide (pyr) operon by binding in a uridine-dependent manner to specific sites on pyr mRNA. This disrupts an antiterminator hairpin in the RNA and favors formation of a downstream transcription terminator, leading to a reduced expression of downstream genes. Functionally, also displays a weak uracil phosphoribosyltransferase activity which is not physiologically significant. In Streptococcus agalactiae serotype Ia (strain ATCC 27591 / A909 / CDC SS700), this protein is Bifunctional protein PyrR.